A 173-amino-acid polypeptide reads, in one-letter code: ATP-dependent protease subunit HslV (173 aa).

Residue T2 is part of the active site. Residues G158, D161, and T164 each coordinate Na(+).

The protein belongs to the peptidase T1B family. HslV subfamily. As to quaternary structure, a double ring-shaped homohexamer of HslV is capped on each side by a ring-shaped HslU homohexamer. The assembly of the HslU/HslV complex is dependent on binding of ATP.

It is found in the cytoplasm. It catalyses the reaction ATP-dependent cleavage of peptide bonds with broad specificity.. Allosterically activated by HslU binding. Protease subunit of a proteasome-like degradation complex believed to be a general protein degrading machinery. The chain is ATP-dependent protease subunit HslV from Actinobacillus succinogenes (strain ATCC 55618 / DSM 22257 / CCUG 43843 / 130Z).